Here is a 428-residue protein sequence, read N- to C-terminus: D-alanine--D-alanine ligase (428 aa).

The region spanning 205 to 424 is the ATP-grasp domain; it reads KVVLDAAGIP…YTELITRLIE (220 aa). 237-299 provides a ligand contact to ATP; that stretch reads DAGLTYPLFV…EQGIDGREIE (63 aa). Mg(2+) is bound by residues D378, E391, and N393.

Belongs to the D-alanine--D-alanine ligase family. The cofactor is Mg(2+). Mn(2+) serves as cofactor.

Its subcellular location is the cytoplasm. The enzyme catalyses 2 D-alanine + ATP = D-alanyl-D-alanine + ADP + phosphate + H(+). Its pathway is cell wall biogenesis; peptidoglycan biosynthesis. In terms of biological role, cell wall formation. The polypeptide is D-alanine--D-alanine ligase (Bifidobacterium longum (strain NCC 2705)).